Reading from the N-terminus, the 203-residue chain is Small ribosomal subunit protein uS5 (203 aa).

The span at 1–25 shows a compositional bias: basic and acidic residues; that stretch reads MPGRTRRDGGSESGGKDRRDRRDGG. The interval 1 to 36 is disordered; the sequence is MPGRTRRDGGSESGGKDRRDRRDGGRGGAAQEKTPQ. The S5 DRBM domain occupies 36–99; the sequence is QFERVVTINR…EEAKKNFFRV (64 aa).

It belongs to the universal ribosomal protein uS5 family. Part of the 30S ribosomal subunit. Contacts proteins S4 and S8.

Functionally, with S4 and S12 plays an important role in translational accuracy. Its function is as follows. Located at the back of the 30S subunit body where it stabilizes the conformation of the head with respect to the body. The polypeptide is Small ribosomal subunit protein uS5 (Saccharopolyspora erythraea (strain ATCC 11635 / DSM 40517 / JCM 4748 / NBRC 13426 / NCIMB 8594 / NRRL 2338)).